A 795-amino-acid chain; its full sequence is Phenylalanine--tRNA ligase beta subunit (795 aa).

The tRNA-binding domain occupies 39-148 (AGTFNGVVVG…LDAPIGTDLR (110 aa)). Residues 401 to 476 (PKVNTVQLRR…RIYGYNSIPN (76 aa)) enclose the B5 domain. Mg(2+)-binding residues include Asp454, Asp460, Glu463, and Glu464. An FDX-ACB domain is found at 701 to 794 (SKFPANRRDL…VKQRFNAELR (94 aa)).

The protein belongs to the phenylalanyl-tRNA synthetase beta subunit family. Type 1 subfamily. As to quaternary structure, tetramer of two alpha and two beta subunits. Mg(2+) serves as cofactor.

Its subcellular location is the cytoplasm. The catalysed reaction is tRNA(Phe) + L-phenylalanine + ATP = L-phenylalanyl-tRNA(Phe) + AMP + diphosphate + H(+). The protein is Phenylalanine--tRNA ligase beta subunit (pheT) of Haemophilus influenzae (strain ATCC 51907 / DSM 11121 / KW20 / Rd).